The sequence spans 424 residues: Protein SamB (424 aa).

In terms of domain architecture, UmuC spans 2–189 (FALADVNSFY…QPVEEIWGVG (188 aa)).

The protein belongs to the DNA polymerase type-Y family.

Its function is as follows. Involved in UV protection and mutation. This Salmonella typhimurium protein is Protein SamB (samB).